We begin with the raw amino-acid sequence, 265 residues long: Undecaprenyl-diphosphatase 1 (265 aa).

7 helical membrane passes run 4–24 (IITA…PISS), 42–62 (AKTF…ILYH), 84–104 (FHVF…HDII), 108–128 (LFQP…MIFA), 184–204 (SEFS…LDLL), 217–237 (MFAV…VTFL), and 245–265 (LKPF…FVLL).

Belongs to the UppP family.

It is found in the cell membrane. The catalysed reaction is di-trans,octa-cis-undecaprenyl diphosphate + H2O = di-trans,octa-cis-undecaprenyl phosphate + phosphate + H(+). In terms of biological role, catalyzes the dephosphorylation of undecaprenyl diphosphate (UPP). Confers resistance to bacitracin. The polypeptide is Undecaprenyl-diphosphatase 1 (Bacillus thuringiensis subsp. konkukian (strain 97-27)).